The sequence spans 414 residues: Enolase (414 aa).

Gln162 lines the (2R)-2-phosphoglycerate pocket. Glu204 serves as the catalytic Proton donor. Mg(2+)-binding residues include Asp239, Glu280, and Asp307. The (2R)-2-phosphoglycerate site is built by Lys332, Arg361, Ser362, and Lys383. Catalysis depends on Lys332, which acts as the Proton acceptor.

It belongs to the enolase family. Mg(2+) is required as a cofactor.

Its subcellular location is the cytoplasm. It is found in the secreted. It localises to the cell surface. It carries out the reaction (2R)-2-phosphoglycerate = phosphoenolpyruvate + H2O. Its pathway is carbohydrate degradation; glycolysis; pyruvate from D-glyceraldehyde 3-phosphate: step 4/5. In terms of biological role, catalyzes the reversible conversion of 2-phosphoglycerate (2-PG) into phosphoenolpyruvate (PEP). It is essential for the degradation of carbohydrates via glycolysis. The polypeptide is Enolase (Campylobacter jejuni subsp. jejuni serotype O:6 (strain 81116 / NCTC 11828)).